The chain runs to 391 residues: MAIFRDRTDKQVDHDRAIEDKRRHRQLVEKSIKENLGDILSEESIVGQSKNKKFKIPIKSIKEYQFVYGKNSKGVATGTGEEKRGDKIESGSKKAMGKGNKGAGNEEGDEVYETEITLDELMEYISDELNLPNLDEKKYSEIITDSCGKKKGYQRHGIRPRLAKKRTVMAKISRKQSKKRALIEEGKDYKTERFPFREEDLRYYKVKMQPKKASNAVMIFIMDASGSMDSTKKYLARSYFFVLSRFLKRKYNNIAFEFIYHTTVAKRVSEYEFFHKSESGGTYISSGIVEAINLIDEKYPPSEWNIYPVYASDGDNWSEDNIKAIESVKEICKISNMFGYAELLPSTYTQTMYYKFNKEINEKNFISVVIKEKKDLWEALKTMLKQELKED.

2 disordered regions span residues 1–23 (MAIF…DKRR) and 75–107 (VATG…GNEE). Basic and acidic residues predominate over residues 80–92 (GEEKRGDKIESGS).

Belongs to the UPF0229 family.

The protein is UPF0229 protein CLH_2838 of Clostridium botulinum (strain Alaska E43 / Type E3).